We begin with the raw amino-acid sequence, 236 residues long: MTKLDAKSIINYIGNAPKKTPVKVFIKGQLDQIDFPEEIENFNETHSGVIFGDWKDVEPFLKENQDKIQDYRIENNARNSAVPMIDMKKFDARIEPGAIIRDQVAIGKNAVIMMGAIINIGAEIGDDTMIDMGVVLGGRAIVGKHCHIGAGSVLAGVIEPASATPVKIDDNVVMGANAVVIEGVHVGEGAVIAAGAVVTHDVEPHTMVAGVPAKVIKKVDDQTESKTGLEDNLRKI.

Belongs to the transferase hexapeptide repeat family. DapH subfamily.

The enzyme catalyses (S)-2,3,4,5-tetrahydrodipicolinate + acetyl-CoA + H2O = L-2-acetamido-6-oxoheptanedioate + CoA. Its pathway is amino-acid biosynthesis; L-lysine biosynthesis via DAP pathway; LL-2,6-diaminopimelate from (S)-tetrahydrodipicolinate (acetylase route): step 1/3. In terms of biological role, catalyzes the transfer of an acetyl group from acetyl-CoA to tetrahydrodipicolinate. The chain is 2,3,4,5-tetrahydropyridine-2,6-dicarboxylate N-acetyltransferase from Lactobacillus helveticus (strain DPC 4571).